The sequence spans 214 residues: Adenylate kinase (214 aa).

10–15 (GAGKGT) serves as a coordination point for ATP. The interval 30–59 (STGDMLRAAIKAGTELGKQAKSVIDAGQLV) is NMP. Residues Thr31, Arg36, 57-59 (QLV), 85-88 (GFPR), and Gln92 each bind AMP. Positions 122–159 (GRRAHLPSGRTYHVVYNPPKEEGKDDETGEPLVIREDD) are LID. ATP contacts are provided by residues Arg123 and 132–133 (TY). AMP is bound by residues Arg156 and Arg167. An ATP-binding site is contributed by Lys200.

The protein belongs to the adenylate kinase family. In terms of assembly, monomer.

The protein localises to the cytoplasm. The catalysed reaction is AMP + ATP = 2 ADP. It functions in the pathway purine metabolism; AMP biosynthesis via salvage pathway; AMP from ADP: step 1/1. Functionally, catalyzes the reversible transfer of the terminal phosphate group between ATP and AMP. Plays an important role in cellular energy homeostasis and in adenine nucleotide metabolism. This is Adenylate kinase from Aliivibrio fischeri (strain ATCC 700601 / ES114) (Vibrio fischeri).